The chain runs to 63 residues: Large ribosomal subunit protein uL29 (63 aa).

The protein belongs to the universal ribosomal protein uL29 family.

This chain is Large ribosomal subunit protein uL29, found in Ectopseudomonas mendocina (strain ymp) (Pseudomonas mendocina).